The chain runs to 272 residues: MPEVPAAGLWPFLLLLAVQVSTVASSTQPWHCAPCSAEKLALCPPVPSSCPELSRPAGCGCCPMCALPLGAACGVATARYARGLSCRALPGEPRPLHALTRGQGACVPEPATPTASGLSSIEKEEAKASMVPERVPPESAEMTEEQLLESFHLMASSSEDQPILWNAISTYKSMRAREMADIKKWKQPCRRELYKVLERLAKAQQKAGEEIYKFYLPNCNKNGFYHSKQCETSLDGEAELCWCVYPWSGRRIPGSLEIRGDPNCHQYFNVQN.

A signal peptide spans 1–25; that stretch reads MPEVPAAGLWPFLLLLAVQVSTVAS. The IGFBP N-terminal domain maps to 28–109; that stretch reads QPWHCAPCSA…TRGQGACVPE (82 aa). Intrachain disulfides connect C32/C59, C35/C61, C43/C62, C50/C65, and C73/C86. S139, S157, and S169 each carry phosphoserine. The residue at position 170 (T170) is a Phosphothreonine. Y171 is modified (phosphotyrosine). A Thyroglobulin type-1 domain is found at 186–264; that stretch reads KQPCRRELYK…SLEIRGDPNC (79 aa). Cystine bridges form between C189/C219, C230/C241, and C243/C264. S255 is subject to Phosphoserine. Positions 259-261 match the Cell attachment site motif; the sequence is RGD.

As to quaternary structure, binds equally well IGF1 and IGF2. Interacts with integrin ITGA5:ITGB1. Interacts with VHL; this interaction inhibits HIF1A degradation.

The protein localises to the secreted. Multifunctional protein that plays a critical role in regulating the availability of IGFs such as IGF1 and IGF2 to their receptors and thereby regulates IGF-mediated cellular processes including cell migration, proliferation, differentiation or apoptosis in a cell-type specific manner. Also plays a positive role in cell migration by interacting with integrin ITGA5:ITGB1 through its RGD motif. Mechanistically, binding to integrins leads to activation of focal adhesion kinase/PTK2 and stimulation of the mitogen-activated protein kinase (MAPK) pathway. Regulates cardiomyocyte apoptosis by suppressing HIF-1alpha/HIF1A degradation through ubiquitination. The chain is Insulin-like growth factor-binding protein 1 (IGFBP1) from Ictidomys tridecemlineatus (Thirteen-lined ground squirrel).